Reading from the N-terminus, the 286-residue chain is Bifunctional protein FolD (286 aa).

NADP(+) contacts are provided by residues 165–167 (GRS), Ser190, and Val231.

The protein belongs to the tetrahydrofolate dehydrogenase/cyclohydrolase family. Homodimer.

It carries out the reaction (6R)-5,10-methylene-5,6,7,8-tetrahydrofolate + NADP(+) = (6R)-5,10-methenyltetrahydrofolate + NADPH. It catalyses the reaction (6R)-5,10-methenyltetrahydrofolate + H2O = (6R)-10-formyltetrahydrofolate + H(+). Its pathway is one-carbon metabolism; tetrahydrofolate interconversion. Its function is as follows. Catalyzes the oxidation of 5,10-methylenetetrahydrofolate to 5,10-methenyltetrahydrofolate and then the hydrolysis of 5,10-methenyltetrahydrofolate to 10-formyltetrahydrofolate. The sequence is that of Bifunctional protein FolD from Bacillus cereus (strain AH187).